The following is a 264-amino-acid chain: MSYISMKQLLEAGVHFGHETKRWNPKFKRFIFAERNGIFIIDLQKTLKQIDRSFDYIKDLAERGGVILFVGTKKQAQEIVELEARRTGMPYVTSRWLGGMLTNFRTIRTRIDRLNELDDMFESGRVNDRPKAERIELAAERERLLRFVGGIRKMTRLPDAIFVVDPTKEVIAVQEANKLGIPVIALADTDSDPDVIDYIVPGNDDAIRSIQLITHRIGDLIVEARGGGEDVSGERVSPDNADIEAAEDGEEVDNAQLTSSQGRS.

Acidic residues predominate over residues 243–253 (IEAAEDGEEVD). The tract at residues 243-264 (IEAAEDGEEVDNAQLTSSQGRS) is disordered. Residues 255–264 (AQLTSSQGRS) are compositionally biased toward polar residues.

This sequence belongs to the universal ribosomal protein uS2 family.

This is Small ribosomal subunit protein uS2 from Deinococcus geothermalis (strain DSM 11300 / CIP 105573 / AG-3a).